We begin with the raw amino-acid sequence, 183 residues long: Phosphinothricin N-acetyltransferase (183 aa).

In terms of domain architecture, N-acetyltransferase spans 8–173; sequence ADIRRATEAD…WQLDFSLPVP (166 aa). Acetyl-CoA-binding positions include 91 to 93, 99 to 104, and N130; these read VYV and RTGLGS.

It belongs to the acetyltransferase family. PAT/BAR subfamily.

The catalysed reaction is phosphinothricin + acetyl-CoA = N-acetylphosphinothricin + CoA + H(+). Its function is as follows. Inactivates phosphinothricin (PPT) by transfer of an acetyl group from acetyl CoA. Can also acetylate demethylphosphinothricin but not PTT or glutamate. This enzyme is an effector of phosphinothricin tripeptide (PTT or bialaphos) resistance. In Streptomyces hygroscopicus, this protein is Phosphinothricin N-acetyltransferase.